The chain runs to 414 residues: Enterobactin exporter EntS (414 aa).

The Cytoplasmic segment spans residues 1-21 (MNRQSWLLNLSLLKTHPAFRA). A helical transmembrane segment spans residues 22–42 (VFLARFISIVSLGLLGVAVPV). Residues 43–55 (QIQMMTHSTWQVG) lie on the Periplasmic side of the membrane. A helical transmembrane segment spans residues 56 to 76 (LSVTLTGGAMFIGLMVGGVLA). At 77 to 83 (DRYERKK) the chain is on the cytoplasmic side. The chain crosses the membrane as a helical span at residues 84-104 (VILLARGTCGIGFIGLCVNSL). At 105-109 (LPEPS) the chain is on the periplasmic side. A helical transmembrane segment spans residues 110–130 (LLAIYLLGLWDGFFASLGVTA). The Cytoplasmic segment spans residues 131 to 156 (LLAATPALVGRENLMQAGAITMLTVR). The helical transmembrane segment at 157-177 (LGSVISPMLGGILLASGGVAW) threads the bilayer. Residue Asn-178 is a topological domain, periplasmic. Residues 179-199 (YGLAAAGTFITLLPLLTLPRL) form a helical membrane-spanning segment. Over 200 to 218 (PVPPQPRENPFIALLAAFR) the chain is Cytoplasmic. The chain crosses the membrane as a helical span at residues 219-239 (FLLASPLIGGIALLGGLVTMA). Over 240–256 (SAVRVLYPALAMSWQMS) the chain is Periplasmic. The chain crosses the membrane as a helical span at residues 257–277 (AAQIGLLYAAIPLGAAIGALT). The Cytoplasmic segment spans residues 278 to 287 (SGQLAHSVRP). The chain crosses the membrane as a helical span at residues 288–307 (GLIMLVSTVGSFLAVGLFAI). The Periplasmic portion of the chain corresponds to 308-313 (MPVWTA). Residues 314-336 (GVICLALFGWLSAISSLLQYTLL) form a helical membrane-spanning segment. Residues 337–356 (QTQTPENMLGRMNGLWTAQN) are Cytoplasmic-facing. A helical membrane pass occupies residues 357–377 (VTGDAIGAALLGGLGAMMTPV). Residue Ala-378 is a topological domain, periplasmic. Residues 379–399 (SASVSGFGLVIIGLLLLLVLG) form a helical membrane-spanning segment. Topologically, residues 400–414 (ELRRFRQTPPVSDAG) are cytoplasmic.

It belongs to the major facilitator superfamily. EntS (TC 2.A.1.38) family.

Its subcellular location is the cell inner membrane. Its function is as follows. Component of an export pathway for enterobactin. This Salmonella choleraesuis (strain SC-B67) protein is Enterobactin exporter EntS.